A 488-amino-acid polypeptide reads, in one-letter code: 3-octaprenyl-4-hydroxybenzoate carboxy-lyase (488 aa).

Position 172 (Asn172) interacts with Mn(2+). Prenylated FMN is bound by residues 175–177 (IYR), 189–191 (RWL), and 194–195 (RG). A Mn(2+)-binding site is contributed by Glu238. Catalysis depends on Asp287, which acts as the Proton donor.

It belongs to the UbiD family. As to quaternary structure, homohexamer. Requires prenylated FMN as cofactor. The cofactor is Mn(2+).

It is found in the cell membrane. It catalyses the reaction a 4-hydroxy-3-(all-trans-polyprenyl)benzoate + H(+) = a 2-(all-trans-polyprenyl)phenol + CO2. Its pathway is cofactor biosynthesis; ubiquinone biosynthesis. Its function is as follows. Catalyzes the decarboxylation of 3-octaprenyl-4-hydroxy benzoate to 2-octaprenylphenol, an intermediate step in ubiquinone biosynthesis. In Pseudoalteromonas translucida (strain TAC 125), this protein is 3-octaprenyl-4-hydroxybenzoate carboxy-lyase.